Consider the following 216-residue polypeptide: ADP-ribosylation factor D (216 aa).

A compositionally biased stretch (low complexity) spans 188 to 204; the sequence is SKFSFSNKSKQQKSNSQ. Positions 188–216 are disordered; sequence SKFSFSNKSKQQKSNSQPNTPRKNIQMMT. Positions 205-216 are enriched in polar residues; sequence PNTPRKNIQMMT.

Belongs to the small GTPase superfamily. Arf family.

The protein localises to the golgi apparatus. In terms of biological role, GTP-binding protein involved in protein trafficking; may modulate vesicle budding and uncoating within the Golgi apparatus. The sequence is that of ADP-ribosylation factor D (arrD) from Dictyostelium discoideum (Social amoeba).